The primary structure comprises 171 residues: Glycine cleavage system H protein 4 (171 aa).

The Lipoyl-binding domain maps to 30-112; it reads FAEVGITDYA…YEAGWIAVIE (83 aa). At K71 the chain carries N6-lipoyllysine. Residues 139 to 171 are disordered; sequence EKEEEVEVKEEELIETESIEELSEEELGYEENK.

It belongs to the GcvH family. As to quaternary structure, the glycine cleavage system is composed of four proteins: P, T, L and H. It depends on (R)-lipoate as a cofactor.

Its function is as follows. The glycine cleavage system catalyzes the degradation of glycine. The H protein shuttles the methylamine group of glycine from the P protein to the T protein. The chain is Glycine cleavage system H protein 4 from Aquifex aeolicus (strain VF5).